Here is a 395-residue protein sequence, read N- to C-terminus: L-methionine gamma-lyase (395 aa).

Pyridoxal 5'-phosphate is bound by residues 56-58 (YTR) and 86-87 (GM). A substrate-binding site is contributed by tyrosine 111. Residue 206 to 208 (SAT) participates in pyridoxal 5'-phosphate binding. Lysine 209 carries the post-translational modification N6-(pyridoxal phosphate)lysine. Arginine 373 contacts substrate.

It belongs to the trans-sulfuration enzymes family. L-methionine gamma-lyase subfamily. Homotetramer. Pyridoxal 5'-phosphate is required as a cofactor.

The enzyme catalyses L-methionine + H2O = methanethiol + 2-oxobutanoate + NH4(+). It catalyses the reaction L-homocysteine + H2O = 2-oxobutanoate + hydrogen sulfide + NH4(+) + H(+). The catalysed reaction is L-cysteine + H2O = hydrogen sulfide + pyruvate + NH4(+) + H(+). In terms of biological role, catalyzes the alpha,gamma-elimination of L-methionine to produce methanethiol, 2-oxobutanoate and ammonia, and that of L-homocysteine. Can also use L-cysteine as substrate, catalyzing its alpha,beta-elimination; this activity seems to only minimally contribute to the production of hydrogen sulfide (H2S) by F.nucleatum in the oral cavity, which is toxic for a large variety of cells in periodontal regions. The polypeptide is L-methionine gamma-lyase (Fusobacterium nucleatum subsp. nucleatum (strain ATCC 25586 / DSM 15643 / BCRC 10681 / CIP 101130 / JCM 8532 / KCTC 2640 / LMG 13131 / VPI 4355)).